We begin with the raw amino-acid sequence, 436 residues long: Cyclin-dependent kinase 11B (436 aa).

The Nuclear localization signal motif lies at valine 25–lysine 30. Positions lysine 30–glutamate 44 are calmodulin-binding. Positions phenylalanine 79 to phenylalanine 364 constitute a Protein kinase domain. Residues isoleucine 85 to valine 93 and lysine 108 each bind ATP. Serine 123 carries the post-translational modification Phosphoserine; by CDK7. The residue at position 129 (threonine 129) is a Phosphothreonine; by CDK7. The Proton acceptor role is filled by aspartate 203. Serine 230 is modified (phosphoserine). Tyrosine 235 carries the phosphotyrosine modification. At threonine 236 the chain carries Phosphothreonine. Lysine 282 is covalently cross-linked (Glycyl lysine isopeptide (Lys-Gly) (interchain with G-Cter in SUMO2)). Residues serine 383–leucine 406 form a disordered region. Threonine 392 is subject to Phosphothreonine. Serine 393 carries the post-translational modification Phosphoserine.

It belongs to the protein kinase superfamily. CMGC Ser/Thr protein kinase family. CDC2/CDKX subfamily. May interact PAK1 and RANBP9. p110C interacts with RNPS1. Interacts with CCND3. Interacts with CCNL1 and CCNL2. Forms complexes with pre-mRNA-splicing factors, including at least SRSF1, SRSF2 AND SRSF7/SLU7. The cofactor is Mg(2+).

It is found in the cytoplasm. Its subcellular location is the nucleus membrane. The protein localises to the endomembrane system. It localises to the perinuclear region. It catalyses the reaction L-seryl-[protein] + ATP = O-phospho-L-seryl-[protein] + ADP + H(+). The catalysed reaction is L-threonyl-[protein] + ATP = O-phospho-L-threonyl-[protein] + ADP + H(+). Plays multiple roles in cell cycle progression, cytokinesis and apoptosis. Involved in pre-mRNA splicing in a kinase activity-dependent manner. May act as a negative regulator of normal cell cycle progression. The polypeptide is Cyclin-dependent kinase 11B (Cdk11b) (Rattus norvegicus (Rat)).